A 182-amino-acid polypeptide reads, in one-letter code: Antigenic integral membrane glycoprotein (182 aa).

Positions 1-35 (MFSFHERMKKKHVTIRVYKHERILVFLFVLFISTT) are cleaved as a signal peptide. N-linked (GlcNAc...) asparagine glycosylation is found at N88 and N120. A helical membrane pass occupies residues 162 to 180 (EFLMSSCIVITLNLFIFMY). C168 is lipidated: S-palmitoyl cysteine.

It is found in the cell membrane. Major antigen in the surface tegument. In Schistosoma mansoni (Blood fluke), this protein is Antigenic integral membrane glycoprotein.